Consider the following 68-residue polypeptide: Alpha-conotoxin-like Lt1.2 (68 aa).

The N-terminal stretch at 1-21 is a signal peptide; that stretch reads MGMRMMFIMFMLVVLATTVDT. Positions 22–48 are excised as a propeptide; sequence FTSDRALDAMNAAASNKASRLIALAVR. 2 disulfide bridges follow: cysteine 50-cysteine 56 and cysteine 51-cysteine 64. Positions 52-54 are lacks the Ser-Xaa-Pro motif that is crucial for potent interaction with nAChR; it reads ARA. Glycine 65 is subject to Glycine amide.

It belongs to the conotoxin A superfamily. As to expression, expressed by the venom duct.

Its subcellular location is the secreted. Functionally, alpha-conotoxins act on postsynaptic membranes, they bind to the nicotinic acetylcholine receptors (nAChR) and thus inhibit them. Has a distinct nAChR binding mode from other alpha-conotoxins, due to a different three residue motif (Ala-Xaa-Ala instead of the conserved Ser-Xaa-Pro motif). This Conus litteratus (Lettered cone) protein is Alpha-conotoxin-like Lt1.2.